We begin with the raw amino-acid sequence, 64 residues long: Large ribosomal subunit protein bL35 (64 aa).

Residues 1–15 (MPKNKTHSGASKRFR) show a composition bias toward basic residues. A disordered region spans residues 1-20 (MPKNKTHSGASKRFRVTGSG).

The protein belongs to the bacterial ribosomal protein bL35 family.

The polypeptide is Large ribosomal subunit protein bL35 (Nocardioides sp. (strain ATCC BAA-499 / JS614)).